The sequence spans 173 residues: Nicotinamide-nucleotide adenylyltransferase (173 aa).

It belongs to the archaeal NMN adenylyltransferase family.

It localises to the cytoplasm. The enzyme catalyses beta-nicotinamide D-ribonucleotide + ATP + H(+) = diphosphate + NAD(+). It participates in cofactor biosynthesis; NAD(+) biosynthesis; NAD(+) from nicotinamide D-ribonucleotide: step 1/1. This is Nicotinamide-nucleotide adenylyltransferase from Methanosarcina barkeri (strain Fusaro / DSM 804).